We begin with the raw amino-acid sequence, 378 residues long: Wnt inhibitory factor 1 (378 aa).

Residues 1 to 28 (MAFRTPAVQLHLKACVLLLLGGLLEAAY) form the signal peptide. A WIF domain is found at 36-175 (MWIDANQARI…PHNAIFFKTC (140 aa)). Residue N86 is glycosylated (N-linked (GlcNAc...) asparagine). Cystine bridges form between C138–C175, C180–C190, C184–C196, C212–C222, C216–C228, and C230–C239. EGF-like domains follow at residues 176 to 205 (QRAK…FYGV), 208 to 240 (EKAL…SSCE), 243 to 272 (NCST…VRCE), 272 to 304 (ELSK…DLCS), and 305 to 336 (KAVC…RHCN). N243 is a glycosylation site (N-linked (GlcNAc...) asparagine). Intrachain disulfides connect C244-C254, C248-C260, C262-C271, C276-C286, C280-C292, C294-C303, C308-C318, C312-C324, and C326-C335. The interval 343–378 (VSNSQRVSPSKHKSPSVAAAKEAPETSQPSETNYVV) is disordered. Over residues 367–378 (ETSQPSETNYVV) the composition is skewed to polar residues.

As to expression, highly expressed in unsegmented paraxial mesoderm.

The protein localises to the secreted. Binds to WNT proteins and inhibits their activities. May be involved in mesoderm segmentation. The polypeptide is Wnt inhibitory factor 1 (wif1) (Danio rerio (Zebrafish)).